A 463-amino-acid polypeptide reads, in one-letter code: Hexose-6-phosphate:phosphate antiporter (463 aa).

Topologically, residues M1–W24 are cytoplasmic. Residues F25–I45 form a helical membrane-spanning segment. At R46–Y60 the chain is on the periplasmic side. Residues G61–G81 traverse the membrane as a helical segment. The Cytoplasmic portion of the chain corresponds to K82–Q96. The chain crosses the membrane as a helical span at residues F97–G117. The Periplasmic segment spans residues A118–S122. The chain crosses the membrane as a helical span at residues L123 to C143. Over S144 to T159 the chain is Cytoplasmic. Residues F160–L180 traverse the membrane as a helical segment. Residues F181–G189 lie on the Periplasmic side of the membrane. Residues H190 to L210 form a helical membrane-spanning segment. Residues R211–K259 are Cytoplasmic-facing. The helical transmembrane segment at V260–Q280 threads the bilayer. The Periplasmic portion of the chain corresponds to W281 to A297. The helical transmembrane segment at I298 to L318 threads the bilayer. The Cytoplasmic segment spans residues S319–R326. The chain crosses the membrane as a helical span at residues A327–A347. Topologically, residues S348 to L357 are periplasmic. Residues F358–F378 form a helical membrane-spanning segment. The Cytoplasmic portion of the chain corresponds to V379–K382. Residues A383–A403 traverse the membrane as a helical segment. The Periplasmic segment spans residues K404–T425. Residues F426–M446 form a helical membrane-spanning segment. Topologically, residues E447 to A463 are cytoplasmic.

It belongs to the major facilitator superfamily. Organophosphate:Pi antiporter (OPA) (TC 2.A.1.4) family.

It is found in the cell inner membrane. Its function is as follows. Mediates the exchange of external hexose 6-phosphate and internal inorganic phosphate. This chain is Hexose-6-phosphate:phosphate antiporter (uhpT), found in Salmonella typhimurium (strain LT2 / SGSC1412 / ATCC 700720).